A 153-amino-acid polypeptide reads, in one-letter code: Ribosomal RNA large subunit methyltransferase H (153 aa).

S-adenosyl-L-methionine is bound by residues L71 and G102.

This sequence belongs to the RNA methyltransferase RlmH family. As to quaternary structure, homodimer.

The protein resides in the cytoplasm. It catalyses the reaction pseudouridine(1915) in 23S rRNA + S-adenosyl-L-methionine = N(3)-methylpseudouridine(1915) in 23S rRNA + S-adenosyl-L-homocysteine + H(+). Functionally, specifically methylates the pseudouridine at position 1915 (m3Psi1915) in 23S rRNA. This Anaeromyxobacter sp. (strain K) protein is Ribosomal RNA large subunit methyltransferase H.